Consider the following 304-residue polypeptide: tRNA pseudouridine synthase B (304 aa).

The Nucleophile role is filled by Asp-48.

Belongs to the pseudouridine synthase TruB family. Type 1 subfamily.

It catalyses the reaction uridine(55) in tRNA = pseudouridine(55) in tRNA. Its function is as follows. Responsible for synthesis of pseudouridine from uracil-55 in the psi GC loop of transfer RNAs. The sequence is that of tRNA pseudouridine synthase B from Pseudomonas aeruginosa (strain UCBPP-PA14).